The chain runs to 315 residues: Ornithine carbamoyltransferase, anabolic (315 aa).

Carbamoyl phosphate-binding positions include 57-60 (STRT), Q84, R108, and 135-138 (HPCQ). L-ornithine is bound by residues N166, D230, and 234–235 (SM). Residues 270–271 (CL) and R298 contribute to the carbamoyl phosphate site.

This sequence belongs to the aspartate/ornithine carbamoyltransferase superfamily. OTCase family. Homododecamer (tetramer of trimers).

The protein localises to the cytoplasm. The enzyme catalyses carbamoyl phosphate + L-ornithine = L-citrulline + phosphate + H(+). It participates in amino-acid biosynthesis; L-arginine biosynthesis; L-arginine from L-ornithine and carbamoyl phosphate: step 1/3. Its activity is regulated as follows. Inhibited by the bisubstrate delta-N-phosphonoacetyl-L-ornithine (PALO). Functionally, reversibly catalyzes the transfer of the carbamoyl group from carbamoyl phosphate (CP) to the N(epsilon) atom of ornithine (ORN) to produce L-citrulline, which is a substrate for argininosuccinate synthetase, the enzyme involved in the final step in arginine biosynthesis. The protein is Ornithine carbamoyltransferase, anabolic of Pyrococcus furiosus (strain ATCC 43587 / DSM 3638 / JCM 8422 / Vc1).